A 464-amino-acid chain; its full sequence is ATP-dependent protease ATPase subunit HslU (464 aa).

Residues V18, 60–65 (GVGKTE), D277, E342, and R414 each bind ATP.

Belongs to the ClpX chaperone family. HslU subfamily. A double ring-shaped homohexamer of HslV is capped on each side by a ring-shaped HslU homohexamer. The assembly of the HslU/HslV complex is dependent on binding of ATP.

Its subcellular location is the cytoplasm. Its function is as follows. ATPase subunit of a proteasome-like degradation complex; this subunit has chaperone activity. The binding of ATP and its subsequent hydrolysis by HslU are essential for unfolding of protein substrates subsequently hydrolyzed by HslV. HslU recognizes the N-terminal part of its protein substrates and unfolds these before they are guided to HslV for hydrolysis. The sequence is that of ATP-dependent protease ATPase subunit HslU from Lactobacillus leichmannii.